Reading from the N-terminus, the 244-residue chain is Tegument protein UL51 homolog (244 aa).

C10 carries the S-palmitoyl cysteine; by host lipid modification.

The protein belongs to the herpesviridae UL51 family. As to quaternary structure, oligomerizes. Interacts with ORF55; this interaction mediates ORF55 incorporation to virions. In terms of processing, phosphorylated. Post-translationally, palmitoylation is necessary for Golgi localization.

It localises to the virion tegument. It is found in the host cytoplasm. The protein resides in the host Golgi apparatus. Functionally, plays several roles during the time course of infection, including egress of virus particles from the perinuclear space and secondary envelopment of cytoplasmic capsids that bud into specific trans-Golgi network (TGN)-derived membranes. The polypeptide is Tegument protein UL51 homolog (8) (Equus caballus (Horse)).